We begin with the raw amino-acid sequence, 274 residues long: NH(3)-dependent NAD(+) synthetase (274 aa).

Residue 46–53 (GISGGQDS) participates in ATP binding. D52 is a Mg(2+) binding site. Residue R140 coordinates deamido-NAD(+). T160 contacts ATP. E165 is a Mg(2+) binding site. The deamido-NAD(+) site is built by K173 and D180. ATP is bound by residues K189 and T211. 260 to 261 (HK) is a deamido-NAD(+) binding site.

The protein belongs to the NAD synthetase family. As to quaternary structure, homodimer.

It carries out the reaction deamido-NAD(+) + NH4(+) + ATP = AMP + diphosphate + NAD(+) + H(+). Its pathway is cofactor biosynthesis; NAD(+) biosynthesis; NAD(+) from deamido-NAD(+) (ammonia route): step 1/1. Its function is as follows. Catalyzes the ATP-dependent amidation of deamido-NAD to form NAD. Uses ammonia as a nitrogen source. This chain is NH(3)-dependent NAD(+) synthetase, found in Streptococcus equi subsp. equi (strain 4047).